We begin with the raw amino-acid sequence, 819 residues long: Zinc finger protein 27 (819 aa).

The region spanning 1 to 75 (MDVTIDFSRE…KTLGAESCHD (75 aa)) is the KRAB domain. The segment at 93–123 (PKRPRHWDPPEDEPKHSSDLQTHDESNGLKR) is disordered. Positions 98 to 120 (HWDPPEDEPKHSSDLQTHDESNG) are enriched in basic and acidic residues. 21 consecutive C2H2-type zinc fingers follow at residues 205–227 (YVCV…QKTH), 233–255 (YKCG…RRIH), 261–283 (YDCS…QKIH), 289–311 (HGCV…QKIH), 317–339 (YVCI…RRIH), 345–367 (YACD…QRIH), 401–423 (SICA…QRTH), 429–451 (YQCG…RRIH), 457–479 (YVCV…QVIH), 485–507 (YQCG…KRIH), 513–535 (YVCS…QKTH), 541–563 (YVCA…QRIH), 569–591 (YGCS…EKIH), 597–619 (YGCR…QKIH), 625–647 (HVCA…QRIH), 653–675 (YGCT…RPIH), 681–703 (YVCA…QKTH), 709–731 (YACS…HRIH), 737–759 (YDCG…QRIH), 765–787 (YRCA…QTTH), and 793–815 (YKCV…ENVH).

This sequence belongs to the krueppel C2H2-type zinc-finger protein family.

It is found in the nucleus. In terms of biological role, may be involved in transcriptional regulation. The sequence is that of Zinc finger protein 27 (Zfp27) from Mus musculus (Mouse).